Reading from the N-terminus, the 242-residue chain is UPF0309 protein BOV_A0853 (242 aa).

An SIS domain is found at 30 to 209 (AADLIAAAAR…FADVAARLVG (180 aa)).

Belongs to the UPF0309 family.

The sequence is that of UPF0309 protein BOV_A0853 from Brucella ovis (strain ATCC 25840 / 63/290 / NCTC 10512).